Consider the following 558-residue polypeptide: Arginine--tRNA ligase (558 aa).

Positions 129–139 (ANPTGPLHVGH) match the 'HIGH' region motif.

The protein belongs to the class-I aminoacyl-tRNA synthetase family. Monomer.

It is found in the cytoplasm. It carries out the reaction tRNA(Arg) + L-arginine + ATP = L-arginyl-tRNA(Arg) + AMP + diphosphate. The protein is Arginine--tRNA ligase of Polaromonas naphthalenivorans (strain CJ2).